The following is a 422-amino-acid chain: L-threonine dehydratase biosynthetic IlvA (422 aa).

An N6-(pyridoxal phosphate)lysine modification is found at lysine 56. Pyridoxal 5'-phosphate contacts are provided by residues asparagine 83, glycine 189–leucine 193, and serine 315. Residues histidine 339–glutamate 413 enclose the ACT-like domain.

The protein belongs to the serine/threonine dehydratase family. In terms of assembly, homotetramer. Pyridoxal 5'-phosphate is required as a cofactor.

The catalysed reaction is L-threonine = 2-oxobutanoate + NH4(+). Its pathway is amino-acid biosynthesis; L-isoleucine biosynthesis; 2-oxobutanoate from L-threonine: step 1/1. Catalyzes the anaerobic formation of alpha-ketobutyrate and ammonia from threonine in a two-step reaction. The first step involved a dehydration of threonine and a production of enamine intermediates (aminocrotonate), which tautomerizes to its imine form (iminobutyrate). Both intermediates are unstable and short-lived. The second step is the nonenzymatic hydrolysis of the enamine/imine intermediates to form 2-ketobutyrate and free ammonia. In the low water environment of the cell, the second step is accelerated by RidA. This chain is L-threonine dehydratase biosynthetic IlvA (ilvA), found in Staphylococcus aureus (strain Mu50 / ATCC 700699).